We begin with the raw amino-acid sequence, 37 residues long: Large ribosomal subunit protein bL36 (37 aa).

It belongs to the bacterial ribosomal protein bL36 family.

The protein is Large ribosomal subunit protein bL36 of Helicobacter pylori (strain ATCC 700392 / 26695) (Campylobacter pylori).